We begin with the raw amino-acid sequence, 693 residues long: Polyribonucleotide nucleotidyltransferase (693 aa).

Asp-485 and Asp-491 together coordinate Mg(2+). A KH domain is found at 552 to 611 (PRIMVLEINPSKIGDLIGPSGKNIKKIIEETHTTINIKPEGLVYISAPDQESAEKAAQMV). One can recognise an S1 motif domain in the interval 621–691 (GDIFLGKVIR…SSGRISLTRK (71 aa)).

This sequence belongs to the polyribonucleotide nucleotidyltransferase family. Mg(2+) is required as a cofactor.

Its subcellular location is the cytoplasm. It catalyses the reaction RNA(n+1) + phosphate = RNA(n) + a ribonucleoside 5'-diphosphate. Functionally, involved in mRNA degradation. Catalyzes the phosphorolysis of single-stranded polyribonucleotides processively in the 3'- to 5'-direction. The protein is Polyribonucleotide nucleotidyltransferase of Dictyoglomus thermophilum (strain ATCC 35947 / DSM 3960 / H-6-12).